The sequence spans 128 residues: ATP synthase epsilon chain (128 aa).

A disordered region spans residues 98–128; that stretch reads EALDMPSSTPEQAQIKDAAVRRARGQLRASR. A compositionally biased stretch (basic residues) spans 118–128; sequence RRARGQLRASR.

It belongs to the ATPase epsilon chain family. As to quaternary structure, F-type ATPases have 2 components, CF(1) - the catalytic core - and CF(0) - the membrane proton channel. CF(1) has five subunits: alpha(3), beta(3), gamma(1), delta(1), epsilon(1). CF(0) has three main subunits: a, b and c.

The protein localises to the cell inner membrane. Produces ATP from ADP in the presence of a proton gradient across the membrane. In Rhodopirellula baltica (strain DSM 10527 / NCIMB 13988 / SH1), this protein is ATP synthase epsilon chain.